The chain runs to 211 residues: Phosphatidylglycerophosphatase C (211 aa).

Topologically, residues 1–33 (MATHERRVVFFDLDGTLHQQDMFGSFLRYLLRR) are cytoplasmic. Residues 34–54 (QPLNALLVLPLLPIIAIALLI) traverse the membrane as a helical segment. Residues 55-211 (KGRAARWPMS…TPRGELQQLE (157 aa)) are Periplasmic-facing.

Requires Mg(2+) as cofactor.

Its subcellular location is the cell inner membrane. The enzyme catalyses a 1,2-diacyl-sn-glycero-3-phospho-(1'-sn-glycero-3'-phosphate) + H2O = a 1,2-diacyl-sn-glycero-3-phospho-(1'-sn-glycerol) + phosphate. It functions in the pathway phospholipid metabolism; phosphatidylglycerol biosynthesis; phosphatidylglycerol from CDP-diacylglycerol: step 2/2. Its function is as follows. Lipid phosphatase which dephosphorylates phosphatidylglycerophosphate (PGP) to phosphatidylglycerol (PG). The sequence is that of Phosphatidylglycerophosphatase C (pgpC) from Escherichia coli (strain K12).